The primary structure comprises 285 residues: MTKSIHENGTAASVYQGSIAEYWNQEANPVNLELGEVDGYFHHHYGIGEPDWSVVEGDAATSHERTTRELHRLETWQAEFLLDHLGGVEPEHRIMDAGCGRGGSSFMAHERFGCSVEGVSLSRKQVDFANAQARERGVADKVAFHQLNMLDTGFDTASMRAIWNNESTMYVDLHDLFAEHSRLLARGGRYVTITGCYNDVYGLPSRAVSTINAHYICDIHPRSGYFRAMAANRLVPCAVVDLTEATVPYWRLRAKSPLATGIEETFIEAYTSGSFQYLLIAADRV.

Belongs to the geranyl diphosphate 2-C-methyltransferase family. Requires Mg(2+) as cofactor.

It carries out the reaction (2E)-geranyl diphosphate + S-adenosyl-L-methionine = (E)-2-methylgeranyl diphosphate + S-adenosyl-L-homocysteine + H(+). Catalyzes the SAM-dependent methylation of geranyl diphosphate (GPP) to yield (E)-2-methylgeranyl diphosphate (2-MeGPP). The protein is Geranyl diphosphate 2-C-methyltransferase of Saccharopolyspora erythraea (strain ATCC 11635 / DSM 40517 / JCM 4748 / NBRC 13426 / NCIMB 8594 / NRRL 2338).